Here is a 125-residue protein sequence, read N- to C-terminus: Multifunctional methyltransferase subunit TRM112-like protein (125 aa).

One can recognise a TRM112 domain in the interval 2–121; it reads KLFVHNFMSS…RDGIPNMLKV (120 aa).

Belongs to the TRM112 family.

It is found in the nucleus. The protein localises to the nucleoplasm. The protein resides in the cytoplasm. It localises to the perinuclear region. Acts as an activator of both RNA and protein methyltransferases. The chain is Multifunctional methyltransferase subunit TRM112-like protein from Caenorhabditis elegans.